Here is a 661-residue protein sequence, read N- to C-terminus: MDLTTPEVAEHPDVLRNMSRYTLGLLPSEPPVGDMNNEDSDTNTSITQSPTNSEKLTDILQESQDTKALQEKYLQNIYALTQNQLFKNVEDYSFYNLNREKFQRDKQTIVGVMRKRRHVLNKKIKRLQSHWKQVLGRWEENIARVDRLTEIDKTKNAKKSEPFIKRSTRKVMSNFTAGDIVRSEEEFLEILAKLEQQEKEASNVSEASRIATIPPMILSEEEVKSQYFNDQSRLVTDCPKFYHFQSMPDIWNEEQHSIFVQQFILHGKKFGKIAEAVPGKNSKECVLHYYLTKRTTDYRALVASATKTKGRRRKKLLPSQRGGKKKSKGSALMVDIEAADINKTEENINNQFQEASVTADNMNTWDNTPSVENVESANENVNNHNADEQMDEKIKSLVEGNSAYEIEKGAQEPDPMSIDMTDKSETVSGFKHDVDVYDTAENEGNNTLLQIKESVHEKTPTQDEPMDISQDTIKQEDYYEPKLEQHSSSKRNSISTRKEEDAASALANLSAVGRSISAVDESAHQGHLPGWDEKEEALIFSLAQGMNPMKMPLTPRRASTGPRPRPTFQLTEIDSPNRRRASDCITPSISKILKMVSEDAKSQRIDELSVEDQEHTTHSSHTTSDINAFPNSQSFPRASIHTLAALGEDIVERQSKNDKIV.

Residues 25-52 (LLPSEPPVGDMNNEDSDTNTSITQSPTN) are disordered. The span at 42–52 (TNTSITQSPTN) shows a compositional bias: polar residues. The SANT domain maps to 246-297 (SMPDIWNEEQHSIFVQQFILHGKKFGKIAEAVPGKNSKECVLHYYLTKRTTD). Disordered stretches follow at residues 306 to 329 (TKTK…KSKG), 478 to 499 (YYEP…TRKE), 548 to 570 (PMKM…TFQL), and 604 to 633 (RIDE…PNSQ). Positions 308–328 (TKGRRRKKLLPSQRGGKKKSK) are enriched in basic residues. The span at 478–487 (YYEPKLEQHS) shows a compositional bias: basic and acidic residues. Basic and acidic residues predominate over residues 604-617 (RIDELSVEDQEHTT).

The protein localises to the nucleus. This is an uncharacterized protein from Schizosaccharomyces pombe (strain 972 / ATCC 24843) (Fission yeast).